The chain runs to 326 residues: Tetraacyldisaccharide 4'-kinase (326 aa).

55–62 (TAGGNGKT) lines the ATP pocket.

It belongs to the LpxK family.

It carries out the reaction a lipid A disaccharide + ATP = a lipid IVA + ADP + H(+). It functions in the pathway glycolipid biosynthesis; lipid IV(A) biosynthesis; lipid IV(A) from (3R)-3-hydroxytetradecanoyl-[acyl-carrier-protein] and UDP-N-acetyl-alpha-D-glucosamine: step 6/6. Functionally, transfers the gamma-phosphate of ATP to the 4'-position of a tetraacyldisaccharide 1-phosphate intermediate (termed DS-1-P) to form tetraacyldisaccharide 1,4'-bis-phosphate (lipid IVA). The sequence is that of Tetraacyldisaccharide 4'-kinase from Klebsiella pneumoniae subsp. pneumoniae (strain ATCC 700721 / MGH 78578).